We begin with the raw amino-acid sequence, 669 residues long: Coagulation factor XIII B chain (669 aa).

An N-terminal signal peptide occupies residues 1-21; that stretch reads MMTLRHLPFILLLILSGELYA. 10 consecutive Sushi domains span residues 25-89, 90-149, 152-211, 212-270, 273-330, 335-392, 395-453, 454-517, 523-581, and 582-648; these read QCDF…PRCY, KKCL…SCRK, ETCL…QCNK, LMCS…ICEG, NRCP…KCIE, VACE…ECVE, ENCK…VCLE, PCTI…PMCI, GMCA…SCLE, and PCTL…PKCT. 20 cysteine pairs are disulfide-bonded: Cys-26-Cys-77, Cys-60-Cys-88, Cys-92-Cys-136, Cys-119-Cys-147, Cys-154-Cys-198, Cys-181-Cys-209, Cys-214-Cys-256, Cys-242-Cys-268, Cys-275-Cys-317, Cys-303-Cys-328, Cys-337-Cys-379, Cys-365-Cys-390, Cys-397-Cys-440, Cys-426-Cys-451, Cys-455-Cys-506, Cys-487-Cys-516, Cys-525-Cys-568, Cys-554-Cys-579, Cys-583-Cys-637, and Cys-617-Cys-647. Residue Asn-163 is glycosylated (N-linked (GlcNAc...) asparagine). Asn-546 carries N-linked (GlcNAc...) asparagine glycosylation.

In terms of assembly, tetramer of two A chains (F13A1) and two B (F13B) chains. Predominantly expressed in liver and kidney.

The protein resides in the secreted. The B chain of factor XIII is not catalytically active, but is thought to stabilize the A subunits and regulate the rate of transglutaminase formation by thrombin. The protein is Coagulation factor XIII B chain (F13b) of Mus musculus (Mouse).